A 254-amino-acid chain; its full sequence is O-antigen biosynthesis glycosyltransferase WbnJ (254 aa).

The protein belongs to the glycosyltransferase 2 family.

It carries out the reaction an N-acetyl-alpha-D-galactosaminyl derivative + UDP-alpha-D-galactose = a beta-D-galactosyl-(1-&gt;3)-N-acetyl-alpha-D-galactosaminyl derivative + UDP + H(+). The enzyme catalyses alpha-D-GalNAc-(1-&gt;3)-alpha-D-GalNAc-di-trans,octa-cis-undecaprenyl diphosphate + UDP-alpha-D-galactose = beta-D-Gal-(1-&gt;3)-alpha-D-GalNAc-(1-&gt;3)-alpha-D-GalNAc-di-trans,octa-cis-undecaprenyl diphosphate + UDP + H(+). The protein operates within bacterial outer membrane biogenesis; LPS O-antigen biosynthesis. Functionally, involved in the assembly of the O-repeating unit during O-antigen biosynthesis. The sequence is that of O-antigen biosynthesis glycosyltransferase WbnJ from Escherichia coli.